Consider the following 166-residue polypeptide: Protein phosphatase 1 regulatory subunit 1A (166 aa).

At Met1 the chain carries N-acetylmethionine. The interval 1–166 is disordered; the sequence is MEQDNSPRKI…SQDSQGASAV (166 aa). The interval 9–12 is essential for activity; sequence KIQF. Residues 19-29 are compositionally biased toward basic and acidic residues; the sequence is PHLDPEAAEQI. Thr35 is modified (phosphothreonine; by PKA). The essential for activity stretch occupies residues 42-54; that stretch reads TSDQSSPEVDEDR. Ser43, Ser46, Ser47, and Ser67 each carry phosphoserine. The segment covering 104–114 has biased composition (low complexity); that stretch reads AAEGTGAQESQ. Positions 143–152 are enriched in basic and acidic residues; sequence AQERRGEEPS. The interval 143–166 is interaction with PPP1R15A; sequence AQERRGEEPSTAKTSQDSQGASAV. Residues 153–166 are compositionally biased toward polar residues; that stretch reads TAKTSQDSQGASAV.

The protein belongs to the protein phosphatase inhibitor 1 family. As to quaternary structure, interacts with PPP1R15A. In terms of processing, phosphorylation of Thr-35 is required for activity.

In terms of biological role, inhibitor of protein-phosphatase 1. This protein may be important in hormonal control of glycogen metabolism. Hormones that elevate intracellular cAMP increase I-1 activity in many tissues. I-1 activation may impose cAMP control over proteins that are not directly phosphorylated by PKA. Following a rise in intracellular calcium, I-1 is inactivated by calcineurin (or PP2B). Does not inhibit type-2 phosphatases. This is Protein phosphatase 1 regulatory subunit 1A (PPP1R1A) from Oryctolagus cuniculus (Rabbit).